Consider the following 69-residue polypeptide: Arabinogalactan protein 24 (69 aa).

An N-terminal signal peptide occupies residues 1–25 (MMMMTKMFVQIAVVCLLATMAVVSA). 4 positions are modified to 4-hydroxyproline: Pro34, Pro36, Pro38, and Pro40. O-linked (Ara...) hydroxyproline glycosylation is found at Pro34, Pro36, Pro38, and Pro40. The GPI-anchor amidated serine moiety is linked to residue Ser42. A propeptide spans 43 to 69 (SSTVVSATNMFTVLAIAAVALVVGSNH) (removed in mature form).

It belongs to the AG-peptide AGP family. In terms of processing, contains 4-hydroxyproline; hydroxylated on Pro-34, Pro-36, Pro-38 and Pro-40. O-glycosylated on hydroxyprolines; noncontiguous hydroxylproline residues are glycosylated with arabinogalactan.

It is found in the cell membrane. In terms of biological role, proteoglycan that seems to be implicated in diverse developmental roles such as differentiation, cell-cell recognition, embryogenesis and programmed cell death. This chain is Arabinogalactan protein 24, found in Arabidopsis thaliana (Mouse-ear cress).